We begin with the raw amino-acid sequence, 579 residues long: Glycine--tRNA ligase (579 aa).

E175 contacts glycine. Residues 207-209 (RNE) and 218-219 (RV) each bind ATP. Glycine is bound at residue E226. 327-328 (EC) lines the ATP pocket. 442–444 (EPS) provides a ligand contact to glycine. R449 lines the ATP pocket.

Belongs to the class-II aminoacyl-tRNA synthetase family. Homodimer.

The catalysed reaction is tRNA(Gly) + glycine + ATP = glycyl-tRNA(Gly) + AMP + diphosphate. It catalyses the reaction 2 ATP + H(+) = P(1),P(4)-bis(5'-adenosyl) tetraphosphate + diphosphate. Catalyzes the ATP-dependent ligation of glycine to the 3'-end of its cognate tRNA, via the formation of an aminoacyl-adenylate intermediate (Gly-AMP). Also produces diadenosine tetraphosphate (Ap4A), a universal pleiotropic signaling molecule needed for cell regulation pathways, by direct condensation of 2 ATPs. Thereby, may play a special role in Ap4A homeostasis. The chain is Glycine--tRNA ligase from Encephalitozoon cuniculi (strain GB-M1) (Microsporidian parasite).